A 660-amino-acid chain; its full sequence is Rhamnogalacturonate lyase B (660 aa).

The signal sequence occupies residues 1–18 (MRLGVCFSLAAAASVARA). Asparagine 25, asparagine 109, asparagine 142, and asparagine 284 each carry an N-linked (GlcNAc...) asparagine glycan. A disordered region spans residues 446 to 466 (RLGTPDKSSGEFRHGAARDPT). Residues 453 to 466 (SSGEFRHGAARDPT) show a composition bias toward basic and acidic residues. N-linked (GlcNAc...) asparagine glycosylation is found at asparagine 524, asparagine 566, and asparagine 635.

The protein belongs to the polysaccharide lyase 4 family.

The protein localises to the secreted. The enzyme catalyses Endotype eliminative cleavage of L-alpha-rhamnopyranosyl-(1-&gt;4)-alpha-D-galactopyranosyluronic acid bonds of rhamnogalacturonan I domains in ramified hairy regions of pectin leaving L-rhamnopyranose at the reducing end and 4-deoxy-4,5-unsaturated D-galactopyranosyluronic acid at the non-reducing end.. Its function is as follows. Pectinolytic enzymes consist of four classes of enzymes: pectin lyase, polygalacturonase, pectin methylesterase and rhamnogalacturonase. Degrades the rhamnogalacturonan I (RG-I) backbone of pectin. Active against linseed rhamnogalacturonan. In Emericella nidulans (strain FGSC A4 / ATCC 38163 / CBS 112.46 / NRRL 194 / M139) (Aspergillus nidulans), this protein is Rhamnogalacturonate lyase B (rglB).